Here is a 223-residue protein sequence, read N- to C-terminus: dITP/XTP pyrophosphatase (223 aa).

Thr-9–Lys-14 is a substrate binding site. Asp-71 acts as the Proton acceptor in catalysis. Asp-71 provides a ligand contact to Mg(2+). Substrate is bound by residues Ser-72, Phe-152–Asp-155, Lys-175, and His-180–Arg-181. Residues Leu-203–Lys-223 form a disordered region.

Belongs to the HAM1 NTPase family. As to quaternary structure, homodimer. Requires Mg(2+) as cofactor.

It catalyses the reaction XTP + H2O = XMP + diphosphate + H(+). It carries out the reaction dITP + H2O = dIMP + diphosphate + H(+). The enzyme catalyses ITP + H2O = IMP + diphosphate + H(+). Pyrophosphatase that catalyzes the hydrolysis of nucleoside triphosphates to their monophosphate derivatives, with a high preference for the non-canonical purine nucleotides XTP (xanthosine triphosphate), dITP (deoxyinosine triphosphate) and ITP. Seems to function as a house-cleaning enzyme that removes non-canonical purine nucleotides from the nucleotide pool, thus preventing their incorporation into DNA/RNA and avoiding chromosomal lesions. The chain is dITP/XTP pyrophosphatase from Desulfotalea psychrophila (strain LSv54 / DSM 12343).